The following is a 398-amino-acid chain: MNYNKKSIEDIDVKGKKVLVRCDFNVPLNEGKITDENRLVGALPTIKYLMGKGAKIILCSHMGKPKGEPKKELSLLPVAKRLSEMLNKEVIFADDDNVVGENAKKAVEDMKDGDVVLLQNTRYRKEETKNEEVFSKELASLADVFVNDAFGTAHRAHCSTVGVTNYLKEAACGYLIQKELKFLGNAVEKPERPFVAILGGAKVSDKINVINNLLDKVDTLIIGGGMGYTFLKAQGYTIGNSLVEEDKVEYSKEMIDKAKEKGVNLLLPIDNVVADKFDKDASPVVTEDQNIGEGYMGLDIGPKTAKIYSDAIKSAKTVVWNGPMGVFEFKSFANGTIEVAKAMADSDAVTIIGGGDSAAAVNILGFGDKMTHISTGGGASLEFLEGKELPGIAALNDK.

Substrate is bound by residues 23–25 (DFN), R38, 61–64 (HMGK), R122, and R155. ATP contacts are provided by residues K206, G297, E328, and 354–357 (GGDS).

It belongs to the phosphoglycerate kinase family. In terms of assembly, monomer.

It localises to the cytoplasm. It carries out the reaction (2R)-3-phosphoglycerate + ATP = (2R)-3-phospho-glyceroyl phosphate + ADP. The protein operates within carbohydrate degradation; glycolysis; pyruvate from D-glyceraldehyde 3-phosphate: step 2/5. In Clostridium botulinum (strain Langeland / NCTC 10281 / Type F), this protein is Phosphoglycerate kinase.